The sequence spans 147 residues: Transcriptional regulator MraZ (147 aa).

2 consecutive SpoVT-AbrB domains span residues 5-51 (GTPV…PQPV) and 80-123 (ACDV…DSEK).

It belongs to the MraZ family. As to quaternary structure, forms oligomers.

The protein resides in the cytoplasm. Its subcellular location is the nucleoid. The polypeptide is Transcriptional regulator MraZ (Nitrosospira multiformis (strain ATCC 25196 / NCIMB 11849 / C 71)).